The chain runs to 154 residues: uncharacterized protein (154 aa).

A disordered region spans residues 104–124 (NNNNNDNDNNNKEKEDNDEKE). Positions 112-124 (NNNKEKEDNDEKE) are enriched in basic and acidic residues.

This is an uncharacterized protein from Dictyostelium discoideum (Social amoeba).